Here is a 189-residue protein sequence, read N- to C-terminus: Elongation factor P (189 aa).

Lys35 carries the N6-(3,6-diaminohexanoyl)-5-hydroxylysine modification.

It belongs to the elongation factor P family. In terms of processing, may be beta-lysylated on the epsilon-amino group of Lys-35 by the combined action of EpmA and EpmB, and then hydroxylated on the C5 position of the same residue by EpmC (if this protein is present). Lysylation is critical for the stimulatory effect of EF-P on peptide-bond formation. The lysylation moiety may extend toward the peptidyltransferase center and stabilize the terminal 3-CCA end of the tRNA. Hydroxylation of the C5 position on Lys-35 may allow additional potential stabilizing hydrogen-bond interactions with the P-tRNA.

The protein resides in the cytoplasm. It participates in protein biosynthesis; polypeptide chain elongation. Involved in peptide bond synthesis. Alleviates ribosome stalling that occurs when 3 or more consecutive Pro residues or the sequence PPG is present in a protein, possibly by augmenting the peptidyl transferase activity of the ribosome. Modification of Lys-35 is required for alleviation. The polypeptide is Elongation factor P (Wigglesworthia glossinidia brevipalpis).